The sequence spans 140 residues: Putative pre-16S rRNA nuclease (140 aa).

The protein belongs to the YqgF nuclease family.

The protein resides in the cytoplasm. Functionally, could be a nuclease involved in processing of the 5'-end of pre-16S rRNA. This chain is Putative pre-16S rRNA nuclease, found in Mannheimia succiniciproducens (strain KCTC 0769BP / MBEL55E).